A 408-amino-acid polypeptide reads, in one-letter code: Probable cysteine desulfurase (408 aa).

Lysine 225 carries the N6-(pyridoxal phosphate)lysine modification.

It belongs to the class-V pyridoxal-phosphate-dependent aminotransferase family. Csd subfamily. The cofactor is pyridoxal 5'-phosphate.

The enzyme catalyses (sulfur carrier)-H + L-cysteine = (sulfur carrier)-SH + L-alanine. Functionally, catalyzes the removal of elemental sulfur and selenium atoms from L-cysteine, L-cystine, L-selenocysteine, and L-selenocystine to produce L-alanine. This Mycoplasma pneumoniae (strain ATCC 29342 / M129 / Subtype 1) (Mycoplasmoides pneumoniae) protein is Probable cysteine desulfurase (csd).